Consider the following 130-residue polypeptide: Large ribosomal subunit protein bL12 (130 aa).

Belongs to the bacterial ribosomal protein bL12 family. Homodimer. Part of the ribosomal stalk of the 50S ribosomal subunit. Forms a multimeric L10(L12)X complex, where L10 forms an elongated spine to which 2 to 4 L12 dimers bind in a sequential fashion. Binds GTP-bound translation factors.

Its function is as follows. Forms part of the ribosomal stalk which helps the ribosome interact with GTP-bound translation factors. Is thus essential for accurate translation. In Mycobacterium leprae (strain TN), this protein is Large ribosomal subunit protein bL12.